A 985-amino-acid polypeptide reads, in one-letter code: Eukaryotic translation initiation factor 4E transporter (985 aa).

A disordered region spans residues Met1 to Ser24. The residue at position 5 (Ser5) is a Phosphoserine. The short motif at Tyr30–Leu36 is the YXXXXLphi motif element. Ser74, Ser78, Ser115, Ser120, Ser136, and Ser138 each carry phosphoserine. The interaction with CSDE1 stretch occupies residues Val131–Ile161. The short motif at Arg195 to Asn211 is the Nuclear localization signal element. A disordered region spans residues Arg208–Ser230. Positions Pro219–Asp240 are interaction with DDX6. 4 positions are modified to phosphoserine: Ser301, Ser345, Ser353, and Ser374. Lys410 is covalently cross-linked (Glycyl lysine isopeptide (Lys-Gly) (interchain with G-Cter in SUMO2)). The residue at position 417 (Ser417) is a Phosphoserine. Positions Val438–Val447 match the Nuclear export signal motif. The interaction with LSM14A stretch occupies residues Asp448–Thr490. Lys486 carries the post-translational modification N6-acetyllysine. A phosphoserine mark is found at Ser513, Ser564, and Ser587. The Nuclear export signal motif lies at Ile613–Val638. Disordered regions lie at residues Gln664–Ser693 and Glu707–Pro803. Ser693 is modified (phosphoserine). The interval Ser695–Lys713 is interaction with PATL1. Basic and acidic residues-rich tracts occupy residues Glu707 to Ala717 and Asp725 to Glu735. Low complexity predominate over residues Glu736–Ser746. Ser752 carries the phosphoserine modification. A compositionally biased stretch (polar residues) spans Thr754–Arg776. Phosphoserine is present on residues Ser920 and Ser951. The segment at Gln922 to Val953 is disordered. An interaction with LSM14A region spans residues Gln940–Gln985.

This sequence belongs to the 4E-T/EIF4E-T family. As to quaternary structure, interacts (via YXXXXLphi motif) with EIF4E. Interacts (via YXXXXLphi motif) with EIF4E2. Interacts with DDX6. Interacts with CSDE1/UNR. Interacts with CNOT1; promoting association with the CCR4-NOT complex. Interacts with LSM14A; promoting EIF4ENIF1 localization to P-bodies. Interacts with PATL1. Interacts with importin beta only in the presence of importin alpha, suggesting a direct interaction with importin alpha. Interacts with APOBEC3G in an RNA-dependent manner. Post-translationally, phosphorylation by MAPK8/JNK1 and or MAPK9/JNK2 in response to oxidative stress promotes P-body assembly. Phosphorylated during meiotic maturation. Widely expressed.

Its subcellular location is the cytoplasm. The protein resides in the P-body. It is found in the nucleus. The protein localises to the PML body. It localises to the nucleus speckle. Its function is as follows. EIF4E-binding protein that regulates translation and stability of mRNAs in processing bodies (P-bodies). Plays a key role in P-bodies to coordinate the storage of translationally inactive mRNAs in the cytoplasm and prevent their degradation. Acts as a binding platform for multiple RNA-binding proteins: promotes deadenylation of mRNAs via its interaction with the CCR4-NOT complex, and blocks decapping via interaction with eIF4E (EIF4E and EIF4E2), thereby protecting deadenylated and repressed mRNAs from degradation. Component of a multiprotein complex that sequesters and represses translation of proneurogenic factors during neurogenesis. Promotes miRNA-mediated translational repression. Required for the formation of P-bodies. Involved in mRNA translational repression mediated by the miRNA effector TNRC6B by protecting TNRC6B-targeted mRNAs from decapping and subsequent decay. Also acts as a nucleoplasmic shuttling protein, which mediates the nuclear import of EIF4E and DDX6 by a piggy-back mechanism. The sequence is that of Eukaryotic translation initiation factor 4E transporter from Homo sapiens (Human).